A 545-amino-acid polypeptide reads, in one-letter code: Periplasmic trehalase (545 aa).

The signal sequence occupies residues 1 to 30; sequence MPDRTALPRAMLAAWVLLLLAACSQGPAPT. Substrate-binding positions include R160, 167-168, N204, 213-215, 285-287, and G318; these read WD, RSQ, and RQE. Residues D320 and E503 each act as proton donor/acceptor in the active site. E518 is a binding site for substrate.

This sequence belongs to the glycosyl hydrolase 37 family.

It localises to the periplasm. The catalysed reaction is alpha,alpha-trehalose + H2O = alpha-D-glucose + beta-D-glucose. Its function is as follows. Provides the cells with the ability to utilize trehalose at high osmolarity by splitting it into glucose molecules that can subsequently be taken up by the phosphotransferase-mediated uptake system. The polypeptide is Periplasmic trehalase (Pseudomonas aeruginosa (strain ATCC 15692 / DSM 22644 / CIP 104116 / JCM 14847 / LMG 12228 / 1C / PRS 101 / PAO1)).